A 453-amino-acid polypeptide reads, in one-letter code: Kynureninase (453 aa).

Residues L114, T115, 142–145, D232, H235, and Y257 contribute to the pyridoxal 5'-phosphate site; that span reads FPSD. The residue at position 258 (K258) is an N6-(pyridoxal phosphate)lysine. Position 286 (W286) interacts with pyridoxal 5'-phosphate.

The protein belongs to the kynureninase family. In terms of assembly, homodimer. Pyridoxal 5'-phosphate is required as a cofactor.

It is found in the cytoplasm. It catalyses the reaction L-kynurenine + H2O = anthranilate + L-alanine + H(+). The enzyme catalyses 3-hydroxy-L-kynurenine + H2O = 3-hydroxyanthranilate + L-alanine + H(+). Its pathway is amino-acid degradation; L-kynurenine degradation; L-alanine and anthranilate from L-kynurenine: step 1/1. The protein operates within cofactor biosynthesis; NAD(+) biosynthesis; quinolinate from L-kynurenine: step 2/3. In terms of biological role, catalyzes the cleavage of L-kynurenine (L-Kyn) and L-3-hydroxykynurenine (L-3OHKyn) into anthranilic acid (AA) and 3-hydroxyanthranilic acid (3-OHAA), respectively. The protein is Kynureninase of Cryptococcus neoformans var. neoformans serotype D (strain JEC21 / ATCC MYA-565) (Filobasidiella neoformans).